The chain runs to 177 residues: Ribonuclease H (177 aa).

An RNase H type-1 domain is found at 1-142 (MSKQVEIFTD…ADELAREGMA (142 aa)). 4 residues coordinate Mg(2+): aspartate 10, glutamate 48, aspartate 70, and aspartate 134. Basic and acidic residues predominate over residues 126–138 (GHTENERADELAR). Residues 126-177 (GHTENERADELAREGMAPFKKGSFKPAASAPKPDAQLKQPVATKARRSTQSY) form a disordered region.

It belongs to the RNase H family. Monomer. Mg(2+) serves as cofactor.

It localises to the cytoplasm. The enzyme catalyses Endonucleolytic cleavage to 5'-phosphomonoester.. Endonuclease that specifically degrades the RNA of RNA-DNA hybrids. This chain is Ribonuclease H, found in Mesorhizobium japonicum (strain LMG 29417 / CECT 9101 / MAFF 303099) (Mesorhizobium loti (strain MAFF 303099)).